The primary structure comprises 323 residues: Acetyl esterase (323 aa).

Residues histidine 91–glycine 93 carry the Involved in the stabilization of the negatively charged intermediate by the formation of the oxyanion hole motif. Catalysis depends on residues serine 165, aspartate 262, and histidine 292.

This sequence belongs to the 'GDXG' lipolytic enzyme family. As to quaternary structure, homodimer. Interacts with MalT and MelA.

It is found in the cytoplasm. Functionally, displays esterase activity towards short chain fatty esters (acyl chain length of up to 8 carbons). Able to hydrolyze triacetylglycerol (triacetin) and tributyrylglycerol (tributyrin), but not trioleylglycerol (triolein) or cholesterol oleate. Negatively regulates MalT activity by antagonizing maltotriose binding. Inhibits MelA galactosidase activity. The protein is Acetyl esterase of Salmonella schwarzengrund (strain CVM19633).